A 1896-amino-acid polypeptide reads, in one-letter code: Obscurin-like protein 1 (1896 aa).

Position 10 is a phosphoserine (Ser-10). In terms of domain architecture, Ig-like 1 spans 12–100 (PCFLRFPRPV…GEAYAAAAVT (89 aa)). Residues 17 to 19 (FPR) form an interaction with TTN region. An intrachain disulfide couples Cys-33 to Cys-84. Residues 85–94 (RARNAAGEAY) are interaction with TTN. The interval 106–127 (ASDPELQPAERPLPSPGSGEGA) is disordered. 3 Ig-like domains span residues 128 to 225 (PVFL…ALLQ), 243 to 330 (PVVE…QTLS), and 339 to 425 (PRLR…ANVT). 3 cysteine pairs are disulfide-bonded: Cys-149/Cys-209, Cys-267/Cys-319, and Cys-362/Cys-412. The Fibronectin type-III domain maps to 517-615 (PPGPPILAEM…FHGSAHLVPT (99 aa)). Ig-like domains follow at residues 714 to 800 (PVHI…FGVT), 804 to 893 (PPVH…VTIT), 902 to 982 (PSGK…FTVT), 986 to 1075 (PPVR…VTVT), 1078 to 1172 (PERI…PPVQ), 1174 to 1261 (LALE…FTVQ), 1265 to 1357 (PPVR…VEEP), 1357 to 1534 (PLLV…ARLS), 1628 to 1720 (PVTI…RTVA), and 1794 to 1896 (PAQS…VEGN). 6 disulfides stabilise this stretch: Cys-738–Cys-788, Cys-829–Cys-879, Cys-920–Cys-970, Cys-1011–Cys-1061, Cys-1103–Cys-1153, and Cys-1195–Cys-1245. Cystine bridges form between Cys-1381–Cys-1522 and Cys-1650–Cys-1700.

Component of the 3M complex, composed of core components CUL7, CCDC8 and OBSL1. Interacts with CCDC8. Interacts with CUL7; the interaction is direct. Interacts with FBXW8. Interacts (via N-terminal Ig-like domain) with TTN/titin (via C-terminal Ig-like domain); the interaction is direct. Widely expressed, with predominant levels found in the heart.

It localises to the cytoplasm. The protein resides in the cytoskeleton. Its subcellular location is the microtubule organizing center. It is found in the centrosome. The protein localises to the perinuclear region. It localises to the golgi apparatus. Core component of the 3M complex, a complex required to regulate microtubule dynamics and genome integrity. It is unclear how the 3M complex regulates microtubules, it could act by controlling the level of a microtubule stabilizer. Acts as a regulator of the Cul7-RING(FBXW8) ubiquitin-protein ligase, playing a critical role in the ubiquitin ligase pathway that regulates Golgi morphogenesis and dendrite patterning in brain. Required to localize CUL7 to the Golgi apparatus in neurons. The polypeptide is Obscurin-like protein 1 (Homo sapiens (Human)).